The following is a 62-amino-acid chain: Large ribosomal subunit protein bL28 (62 aa).

Positions 1-23 (MGKQCYVTGRKASTGNRRSHALN) are disordered.

It belongs to the bacterial ribosomal protein bL28 family.

The chain is Large ribosomal subunit protein bL28 from Staphylococcus carnosus (strain TM300).